The primary structure comprises 258 residues: Granzyme A (258 aa).

The first 26 residues, 1–26 (MNIPFPFSFPPAICLLLIPGVFPVSC), serve as a signal peptide directing secretion. The propeptide at 27-28 (EG) is activation peptide. A Peptidase S1 domain is found at 29 to 255 (IIGGNEVAPH…HLNWIKKTIA (227 aa)). Cysteine 52 and cysteine 68 are joined by a disulfide. Active-site charge relay system residues include histidine 67 and aspartate 112. 3 disulfides stabilise this stretch: cysteine 146–cysteine 217, cysteine 178–cysteine 196, and cysteine 207–cysteine 230. An N-linked (GlcNAc...) asparagine glycan is attached at asparagine 169. Serine 211 serves as the catalytic Charge relay system.

Belongs to the peptidase S1 family. Granzyme subfamily. In terms of assembly, homodimer; disulfide-linked. Interacts with APEX1.

The protein localises to the secreted. It is found in the cytoplasmic granule. The enzyme catalyses Hydrolysis of proteins, including fibronectin, type IV collagen and nucleolin. Preferential cleavage: -Arg-|-Xaa-, -Lys-|-Xaa- &gt;&gt; -Phe-|-Xaa- in small molecule substrates.. In terms of biological role, abundant protease in the cytosolic granules of cytotoxic T-cells and NK-cells which activates caspase-independent pyroptosis when delivered into the target cell through the immunological synapse. It cleaves after Lys or Arg. Cleaves APEX1 after 'Lys-31' and destroys its oxidative repair activity. Cleaves the nucleosome assembly protein SET after 'Lys-189', which disrupts its nucleosome assembly activity and allows the SET complex to translocate into the nucleus to nick and degrade the DNA. The polypeptide is Granzyme A (GZMA) (Bos taurus (Bovine)).